The sequence spans 126 residues: Nascent polypeptide-associated complex protein (126 aa).

An NAC-A/B domain is found at 10 to 77 (PRMMKQMQKM…AKKVAKEEEK (68 aa)).

This sequence belongs to the NAC-alpha family. Homodimer. Interacts with the ribosome. Binds ribosomal RNA.

Functionally, contacts the emerging nascent chain on the ribosome. The sequence is that of Nascent polypeptide-associated complex protein from Methanococcus maripaludis (strain DSM 14266 / JCM 13030 / NBRC 101832 / S2 / LL).